We begin with the raw amino-acid sequence, 136 residues long: Large ribosomal subunit protein uL16 (136 aa).

Belongs to the universal ribosomal protein uL16 family. Part of the 50S ribosomal subunit.

Functionally, binds 23S rRNA and is also seen to make contacts with the A and possibly P site tRNAs. This chain is Large ribosomal subunit protein uL16, found in Aliivibrio salmonicida (strain LFI1238) (Vibrio salmonicida (strain LFI1238)).